Reading from the N-terminus, the 125-residue chain is Probable prefoldin subunit 6 (125 aa).

This sequence belongs to the prefoldin subunit beta family. Heterohexamer of two PFD-alpha type and four PFD-beta type subunits.

Binds specifically to cytosolic chaperonin (c-CPN) and transfers target proteins to it. Binds to nascent polypeptide chain and promotes folding in an environment in which there are many competing pathways for nonnative proteins. This Drosophila melanogaster (Fruit fly) protein is Probable prefoldin subunit 6.